We begin with the raw amino-acid sequence, 354 residues long: Uroporphyrinogen decarboxylase (354 aa).

Residues 27-31 (RQAGR), D77, Y154, T209, and H327 each bind substrate.

Belongs to the uroporphyrinogen decarboxylase family. In terms of assembly, homodimer.

It is found in the cytoplasm. It carries out the reaction uroporphyrinogen III + 4 H(+) = coproporphyrinogen III + 4 CO2. The protein operates within porphyrin-containing compound metabolism; protoporphyrin-IX biosynthesis; coproporphyrinogen-III from 5-aminolevulinate: step 4/4. In terms of biological role, catalyzes the decarboxylation of four acetate groups of uroporphyrinogen-III to yield coproporphyrinogen-III. The polypeptide is Uroporphyrinogen decarboxylase (Salmonella heidelberg (strain SL476)).